Here is a 264-residue protein sequence, read N- to C-terminus: Fructose-1,6-bisphosphatase/inositol-1-monophosphatase (264 aa).

Mg(2+)-binding residues include Glu70, Asp86, Leu88, and Asp89. Substrate is bound by residues 89-91, Arg185, and Ala190; that span reads DGT. Asp214 contacts Mg(2+).

It belongs to the inositol monophosphatase superfamily. FBPase class 4 family. Mg(2+) serves as cofactor.

It catalyses the reaction beta-D-fructose 1,6-bisphosphate + H2O = beta-D-fructose 6-phosphate + phosphate. The catalysed reaction is a myo-inositol phosphate + H2O = myo-inositol + phosphate. Functionally, phosphatase with broad specificity; it can dephosphorylate fructose 1,6-bisphosphate, and both D and L isomers of inositol-1-phosphate (I-1-P). In Aquifex aeolicus (strain VF5), this protein is Fructose-1,6-bisphosphatase/inositol-1-monophosphatase (suhB).